We begin with the raw amino-acid sequence, 283 residues long: Bifunctional protein FolD (283 aa).

NADP(+)-binding positions include 159–161 (GRS), Ser184, and Ile225.

The protein belongs to the tetrahydrofolate dehydrogenase/cyclohydrolase family. Homodimer.

The catalysed reaction is (6R)-5,10-methylene-5,6,7,8-tetrahydrofolate + NADP(+) = (6R)-5,10-methenyltetrahydrofolate + NADPH. The enzyme catalyses (6R)-5,10-methenyltetrahydrofolate + H2O = (6R)-10-formyltetrahydrofolate + H(+). It participates in one-carbon metabolism; tetrahydrofolate interconversion. Its function is as follows. Catalyzes the oxidation of 5,10-methylenetetrahydrofolate to 5,10-methenyltetrahydrofolate and then the hydrolysis of 5,10-methenyltetrahydrofolate to 10-formyltetrahydrofolate. The sequence is that of Bifunctional protein FolD from Methanoculleus marisnigri (strain ATCC 35101 / DSM 1498 / JR1).